We begin with the raw amino-acid sequence, 608 residues long: Afamin (608 aa).

The first 21 residues, Met-1–Ala-21, serve as a signal peptide directing secretion. Albumin domains lie at Leu-22–Thr-210, Gln-211–Glu-403, and Thr-404–Asp-599. N-linked (GlcNAc...) asparagine glycosylation is present at Asn-33. 11 disulfide bridges follow: Cys-77/Cys-86, Cys-99/Cys-114, Cys-113/Cys-124, Cys-148/Cys-193, Cys-192/Cys-201, Cys-224/Cys-270, Cys-269/Cys-277, Cys-289/Cys-303, Cys-302/Cys-313, Cys-340/Cys-385, and Cys-384/Cys-393. An N-linked (GlcNAc...) asparagine glycan is attached at Asn-109. An N-linked (GlcNAc...) asparagine glycan is attached at Asn-153. The segment at Ala-215–Lys-319 is binding pocket for hydrophobic ligands. The N-linked (GlcNAc...) asparagine glycan is linked to Asn-402. Cystine bridges form between Cys-416–Cys-462, Cys-461–Cys-470, Cys-483–Cys-499, Cys-498–Cys-509, and Cys-580–Cys-589. N-linked (GlcNAc...) asparagine glycosylation occurs at Asn-488. The disordered stretch occupies residues Val-583–Arg-608. The span at Lys-596–Arg-608 shows a compositional bias: basic and acidic residues.

It belongs to the ALB/AFP/VDB family. As to quaternary structure, forms a 1:1 complex with Wnt family members; interacts with WNT1, WNT2B, WNT3, WNT5A, WNT7A, WNT7B, WNT8, WNT9A, WNT9B, WNT10A and WNT10B. Interacts with WNT3A. In terms of processing, N-glycosylated; more than 90% of the glycans are sialylated. In terms of tissue distribution, detected in brain, especially on brain capillaries (at protein level). Expressed in isolated brain capillaries.

The protein localises to the secreted. Its function is as follows. Functions as a carrier for hydrophobic molecules in body fluids. Essential for the solubility and activity of lipidated Wnt family members, including WNT1, WNT2B, WNT3, WNT3A, WNT5A, WNT7A, WNT7B, WNT8, WNT9A, WNT9B, WNT10A and WNT10B. Binds vitamin E. May transport vitamin E in body fluids under conditions where the lipoprotein system is not sufficient. May be involved in the transport of vitamin E across the blood-brain barrier. The polypeptide is Afamin (Afm) (Mus musculus (Mouse)).